The sequence spans 190 residues: Elongation factor P-like protein (190 aa).

Belongs to the elongation factor P family.

This Pectobacterium atrosepticum (strain SCRI 1043 / ATCC BAA-672) (Erwinia carotovora subsp. atroseptica) protein is Elongation factor P-like protein.